Here is a 103-residue protein sequence, read N- to C-terminus: Large ribosomal subunit protein bL21 (103 aa).

This sequence belongs to the bacterial ribosomal protein bL21 family. As to quaternary structure, part of the 50S ribosomal subunit. Contacts protein L20.

Its function is as follows. This protein binds to 23S rRNA in the presence of protein L20. In Mycobacteroides abscessus (strain ATCC 19977 / DSM 44196 / CCUG 20993 / CIP 104536 / JCM 13569 / NCTC 13031 / TMC 1543 / L948) (Mycobacterium abscessus), this protein is Large ribosomal subunit protein bL21.